A 391-amino-acid chain; its full sequence is Large ribosomal subunit protein uL3 (391 aa).

The span at 1 to 10 shows a compositional bias: basic and acidic residues; that stretch reads MSHRKFEAPR. The disordered stretch occupies residues 1–41; that stretch reads MSHRKFEAPRHGSLGFRPRRRTRHHRGRCRSFPKDDPSKKP. Residues 17–31 are compositionally biased toward basic residues; it reads RPRRRTRHHRGRCRS.

This sequence belongs to the universal ribosomal protein uL3 family.

Its subcellular location is the cytoplasm. Functionally, the L3 protein is a component of the large subunit of cytoplasmic ribosomes. This Tetrahymena thermophila protein is Large ribosomal subunit protein uL3 (RPL3).